The following is a 340-amino-acid chain: Predicted GPI-anchored protein 46 (340 aa).

The N-terminal stretch at 1–29 (MKILLIYSMTPKLVIWFTLFVLCLQMGDT) is a signal peptide. Over residues 99–115 (SETTTTTTQESETSIAT) the composition is skewed to low complexity. 2 disordered regions span residues 99 to 154 (SETT…SLSS) and 181 to 212 (MSSSSSSSSGSLRDKSKLKQENKQLQSRIKNY). N127 carries an N-linked (GlcNAc...) asparagine glycan. The segment covering 182 to 191 (SSSSSSSSGS) has biased composition (low complexity). A compositionally biased stretch (basic and acidic residues) spans 192–202 (LRDKSKLKQEN). N-linked (GlcNAc...) asparagine glycosylation is present at N270. N314 is lipidated: GPI-anchor amidated asparagine. The propeptide at 315 to 340 (SAPLLWIKISKPTVCLVIALTFLLLG) is removed in mature form.

Its subcellular location is the cell membrane. The protein localises to the secreted. In Candida albicans (strain SC5314 / ATCC MYA-2876) (Yeast), this protein is Predicted GPI-anchored protein 46 (PGA46).